The following is a 255-amino-acid chain: 5'-nucleotidase SurE (255 aa).

Residues D8, D9, S40, and N93 each coordinate a divalent metal cation.

It belongs to the SurE nucleotidase family. A divalent metal cation is required as a cofactor.

The protein resides in the cytoplasm. The catalysed reaction is a ribonucleoside 5'-phosphate + H2O = a ribonucleoside + phosphate. In terms of biological role, nucleotidase that shows phosphatase activity on nucleoside 5'-monophosphates. The sequence is that of 5'-nucleotidase SurE from Nitrobacter winogradskyi (strain ATCC 25391 / DSM 10237 / CIP 104748 / NCIMB 11846 / Nb-255).